Consider the following 270-residue polypeptide: Tryptophan synthase alpha chain (270 aa).

Catalysis depends on proton acceptor residues Glu-57 and Asp-68.

Belongs to the TrpA family. In terms of assembly, tetramer of two alpha and two beta chains.

It catalyses the reaction (1S,2R)-1-C-(indol-3-yl)glycerol 3-phosphate + L-serine = D-glyceraldehyde 3-phosphate + L-tryptophan + H2O. It functions in the pathway amino-acid biosynthesis; L-tryptophan biosynthesis; L-tryptophan from chorismate: step 5/5. In terms of biological role, the alpha subunit is responsible for the aldol cleavage of indoleglycerol phosphate to indole and glyceraldehyde 3-phosphate. The sequence is that of Tryptophan synthase alpha chain from Mycobacterium leprae (strain Br4923).